Reading from the N-terminus, the 493-residue chain is Amino acid permease 2 (493 aa).

The Cytoplasmic segment spans residues 1 to 49; it reads MGETAAANNHRHHHHHGHQVFDVASHDFVPPQPAFKCFDDDGRLKRTGT. 2 helical membrane passes run 50–70 and 71–91; these read VWTA…LSLA and WAIA…FSLV. At 92–138 the chain is on the cytoplasmic side; the sequence is TLYSSTLLSDCYRTGDAVSGKRNYTYMDAVRSILGGFKFKICGLIQY. Residues 139–159 traverse the membrane as a helical segment; that stretch reads LNLFGIAIGYTIAASISMMAI. Topologically, residues 160 to 175 are extracellular; that stretch reads KRSNCFHKSGGKDPCH. Residues 176 to 196 form a helical membrane-spanning segment; sequence MSSNPYMIVFGVAEILLSQVP. Topologically, residues 197-200 are cytoplasmic; the sequence is DFDQ. The helical transmembrane segment at 201 to 221 threads the bilayer; the sequence is IWWISIVAAVMSFTYSAIGLA. The Extracellular portion of the chain corresponds to 222-253; that stretch reads LGIVQVAANGVFKGSLTGISIGTVTQTQKIWR. Residues 254-274 traverse the membrane as a helical segment; sequence TFQALGDIAFAYSYSVVLIEI. Residues 275 to 293 are Cytoplasmic-facing; the sequence is QDTVRSPPAESKTMKKATK. Residues 294-314 form a helical membrane-spanning segment; sequence ISIAVTTIFYMLCGSMGYAAF. Over 315–340 the chain is Extracellular; it reads GDAAPGNLLTGFGFYNPFWLLDIANA. A helical transmembrane segment spans residues 341–361; it reads AIVVHLVGAYQVFAQPIFAFI. The Cytoplasmic segment spans residues 362-396; the sequence is EKSVAERYPDNDFLSKEFEIRIPGFKSPYKVNVFR. The chain crosses the membrane as a helical span at residues 397–417; the sequence is MVYRSGFVVTTTVISMLMPFF. The Extracellular portion of the chain corresponds to 418-419; the sequence is ND. The chain crosses the membrane as a helical span at residues 420-440; that stretch reads VVGILGALGFWPLTVYFPVEM. Residues 441 to 458 are Cytoplasmic-facing; it reads YIKQRKVEKWSTRWVCLQ. The chain crosses the membrane as a helical span at residues 459–479; the sequence is MLSVACLVISVVAGVGSIAGV. Residues 480-493 are Extracellular-facing; it reads MLDLKVYKPFKSTY.

The protein belongs to the amino acid/polyamine transporter 2 family. Amino acid/auxin permease (AAAP) (TC 2.A.18.2) subfamily. In terms of tissue distribution, highly expressed in developing pods. Found in the vascular strands of siliques, cotyledons, leaves and roots, in the inner phloem of stems, and in the funiculi. Lower levels of expression in flowers. Not expressed in seeds.

Its subcellular location is the cell membrane. Its activity is regulated as follows. Inhibited by diethylpyrocarbonate (DEPC). Its function is as follows. Amino acid-proton symporter. Stereospecific transporter with a broad specificity for histidine, arginine, glutamate and neutral amino acids, favoring small amino acids such as alanine, asparagine and glutamine. Also accepts large aromatic residues such as phenlalanine or tyrosine. Has a much higher affinity for basic amino acids as compared with AAP1. May function in xylem-to-phloem transfer and in uptake of amino acids assimilated in the green silique tissue. This chain is Amino acid permease 2 (AAP2), found in Arabidopsis thaliana (Mouse-ear cress).